The following is a 500-amino-acid chain: Proline/betaine transporter (500 aa).

The Cytoplasmic segment spans residues 1 to 37 (MLKRKKIKPITLGDVTIIDDGKLRKAITAASLGNAME). A helical transmembrane segment spans residues 38 to 58 (WFDFGVYGFVAYALGKVFFPG). Residues 59-65 (ADPSVQM) are Periplasmic-facing. A helical transmembrane segment spans residues 66-86 (IAALATFSVPFLIRPLGGLFF). At 87 to 97 (GMLGDKYGRQK) the chain is on the cytoplasmic side. A helical membrane pass occupies residues 98-118 (ILAITIVIMSISTFCIGLIPS). Residues 119–121 (YAT) are Periplasmic-facing. The chain crosses the membrane as a helical span at residues 122–142 (IGIWAPILLLLCKMAQGFSVG). Over 143-169 (GEYTGASIFVAEYSPDRKRGFMGSWLD) the chain is Cytoplasmic. A helical transmembrane segment spans residues 170–190 (FGSIAGFVLGAGVVVLISTIV). Topologically, residues 191–194 (GEEN) are periplasmic. The chain crosses the membrane as a helical span at residues 195 to 215 (FLEWGWRIPFFIALPLGIIGL). Residues 216-260 (YLRHALEETPAFQQHVDKLEQGDREGLQDGPKVSFKEIATKHWRS) lie on the Cytoplasmic side of the membrane. The helical transmembrane segment at 261 to 281 (LLSCIGLVIATNVTYYMLLTY) threads the bilayer. Over 282–297 (MPSYLSHNLHYSEDHG) the chain is Periplasmic. The helical transmembrane segment at 298-318 (VLIIIAIMIGMLFVQPVMGLL) threads the bilayer. The Cytoplasmic portion of the chain corresponds to 319–325 (SDRFGRR). A helical membrane pass occupies residues 326–346 (PFVIMGSIALFALAIPAFILI). Over 347 to 350 (NSNV) the chain is Periplasmic. The chain crosses the membrane as a helical span at residues 351–371 (IGLIFAGLLMLAVILNCFTGV). Residues 372 to 390 (MASTLPAMFPTHIRYSALA) are Cytoplasmic-facing. A helical transmembrane segment spans residues 391-411 (AAFNISVLIAGLTPTLAAWLV). The Periplasmic portion of the chain corresponds to 412 to 416 (ESSQD). A helical membrane pass occupies residues 417-437 (LMMPAYYLMVIAVIGLITGIS). At 438–500 (MKETANRPLK…LVQQHPRIDE (63 aa)) the chain is on the cytoplasmic side. Residues 453 to 498 (ASDIQEAKEILGEHYDNIEQKIDDIDQEIAELQVKRSRLVQQHPRI) are a coiled coil.

It belongs to the major facilitator superfamily. Metabolite:H+ Symporter (MHS) family (TC 2.A.1.6) family.

The protein resides in the cell inner membrane. In terms of biological role, proton symporter that senses osmotic shifts and responds by importing osmolytes such as proline, glycine betaine, stachydrine, pipecolic acid, ectoine and taurine. It is both an osmosensor and an osmoregulator which is available to participate early in the bacterial osmoregulatory response. The chain is Proline/betaine transporter (proP) from Salmonella typhimurium (strain LT2 / SGSC1412 / ATCC 700720).